Consider the following 537-residue polypeptide: Periplasmic murein peptide-binding protein MppA (537 aa).

An N-terminal signal peptide occupies residues 1 to 22 (MKHSVSVTCCALLVSSISLSYA). L-alanyl-gamma-D-glutamyl-meso-2,6-diaminopimelate is bound by residues Lys-42, Val-54, Leu-56, Gln-289, Arg-424, Ser-435, Val-437, Asp-439, and Thr-506.

The protein belongs to the bacterial solute-binding protein 5 family. As to quaternary structure, the complex is composed of two ATP-binding proteins (OppD and OppF), two transmembrane proteins (OppB and OppC) and a solute-binding protein (MppA).

It is found in the periplasm. Functionally, part of the ABC transporter complex MppA-OppBCDF involved in the uptake of the cell wall murein tripeptide L-alanyl-gamma-D-glutamyl-meso-diaminopimelate. Is involved in the recycling of cell wall peptides. Binds the cell wall peptide L-Ala-D-Gly-gamma-meso-diaminopimelic acid. Can also transport ordinary alpha-linked tripeptides such as Pro-Phe-Lys, but with much lower efficiency than OppA. Cannot bind typical tripeptides such as Lys-Glu-Lys, Lys-Lys-Lys or Ala-Ala-Ala. In Escherichia coli (strain K12), this protein is Periplasmic murein peptide-binding protein MppA.